The chain runs to 5541 residues: Malpibaldin synthetase (5541 aa).

The segment covering 1 to 13 has biased composition (basic and acidic residues); it reads MGDKRPDGIKSAE. The interval 1–26 is disordered; the sequence is MGDKRPDGIKSAESHGQPSAPFGAEN. The segment at 137 to 378 is condensation 1; it reads KEDDIARDES…IDIISPAEKT (242 aa). An adenylation 1 region spans residues 401 to 799; that stretch reads FEEQVDKSPD…GRNDDQVKIR (399 aa). In terms of domain architecture, Carrier 1 spans 901–975; the sequence is VPCGETEDAI…VLAQDLSKHQ (75 aa). Serine 936 bears the O-(pantetheine 4'-phosphoryl)serine mark. Residues 1021–1469 form a dual epimerase/condensation (E/C) domain 1 region; it reads QDVYSLAPLQ…LPLDERTKLL (449 aa). The adenylation 2 stretch occupies residues 1489-1899; sequence FEQQVKQSPI…GRNDDQIKIR (411 aa). The Carrier 2 domain occupies 2001-2075; that stretch reads SPQGRIECAL…SFAQAFKGQL (75 aa). Serine 2036 carries the post-translational modification O-(pantetheine 4'-phosphoryl)serine. A condensation 2 region spans residues 2095–2537; sequence ELSFSQQRLW…LGSTEEELLL (443 aa). The adenylation 3 stretch occupies residues 2557 to 2956; it reads FEDQVERSPD…GRNDDQVKIR (400 aa). Residues 3058-3132 enclose the Carrier 3 domain; it reads EPQGEVEMKL…VLAASITRGC (75 aa). Residue serine 3093 is modified to O-(pantetheine 4'-phosphoryl)serine. A dual epimerase/condensation (E/C) domain 2 region spans residues 3182-3616; it reads QDIYSLSPLQ…VIPAEEHDLL (435 aa). The segment at 3637–4038 is adenylation 4; sequence FENQVRERPE…GRNDEQVKIR (402 aa). The Carrier 4 domain occupies 4140 to 4214; the sequence is APRGDIEISL…VLAASLNTHQ (75 aa). The residue at position 4175 (serine 4175) is an O-(pantetheine 4'-phosphoryl)serine. A dual epimerase/condensation (E/C) domain 3 region spans residues 4260-4695; sequence VQDVYSLSPL…VIPAEEHDLL (436 aa). The interval 4716-5117 is adenylation 5; the sequence is FENQVRERPE…GRNDEQVKIR (402 aa). Residues 5219 to 5294 form the Carrier 5 domain; sequence LPSGDVEIGL…ELAQKLVQGG (76 aa). Serine 5254 bears the O-(pantetheine 4'-phosphoryl)serine mark. The segment at 5315 to 5523 is thioesterase (TE) domain; the sequence is PLFCIHSGLG…VECTHIEMDK (209 aa).

It belongs to the NRP synthetase family.

Nonribosomal peptide synthetase that catalyzes the biosynthesis of the hydrophobic cyclopentapeptides malpibaldins, natural products that show biosurfactant activities. Module 3 shows promiscuous adenylation (accepting either Trp, Phe or Tyr) leading to the parallel production of multiple products from one NRPS assembly line, including malpibaldin A corresponding to cyclo(-L-Leu-D-Leu-D-Phe-L-Leu-D-Val-), malpibaldin B corresponding to cyclo(-L-Leu-D-Leu-D-Tyr-L-Leu-D-Val-) and malpibaldin C corresponding to cyclo(-Leu-Leu-Trp-Leu-Val-). The protein is Malpibaldin synthetase of Mortierella alpina (Oleaginous fungus).